A 398-amino-acid polypeptide reads, in one-letter code: 1-deoxy-D-xylulose 5-phosphate reductoisomerase (398 aa).

Residues Thr-10, Gly-11, Ser-12, Ile-13, Gly-36, Arg-37, Asn-38, and Asn-124 each coordinate NADPH. Lys-125 provides a ligand contact to 1-deoxy-D-xylulose 5-phosphate. Glu-126 is an NADPH binding site. Residue Asp-150 participates in Mn(2+) binding. Residues Ser-151, Glu-152, Ser-186, and His-209 each contribute to the 1-deoxy-D-xylulose 5-phosphate site. Residue Glu-152 coordinates Mn(2+). Gly-215 serves as a coordination point for NADPH. 1-deoxy-D-xylulose 5-phosphate contacts are provided by Ser-222, Asn-227, Lys-228, and Glu-231. Glu-231 contributes to the Mn(2+) binding site.

This sequence belongs to the DXR family. Homodimer. The cofactor is Mg(2+). It depends on Mn(2+) as a cofactor.

The catalysed reaction is 2-C-methyl-D-erythritol 4-phosphate + NADP(+) = 1-deoxy-D-xylulose 5-phosphate + NADPH + H(+). The protein operates within isoprenoid biosynthesis; isopentenyl diphosphate biosynthesis via DXP pathway; isopentenyl diphosphate from 1-deoxy-D-xylulose 5-phosphate: step 1/6. Its function is as follows. Catalyzes the NADPH-dependent rearrangement and reduction of 1-deoxy-D-xylulose-5-phosphate (DXP) to 2-C-methyl-D-erythritol 4-phosphate (MEP). The protein is 1-deoxy-D-xylulose 5-phosphate reductoisomerase of Yersinia pseudotuberculosis serotype IB (strain PB1/+).